A 399-amino-acid polypeptide reads, in one-letter code: Aspartate aminotransferase (399 aa).

The L-aspartate site is built by Gly-42 and Asn-179. Lys-240 bears the N6-(pyridoxal phosphate)lysine mark. Arg-372 contributes to the L-aspartate binding site.

This sequence belongs to the class-I pyridoxal-phosphate-dependent aminotransferase family. In terms of assembly, homodimer. Pyridoxal 5'-phosphate serves as cofactor.

It is found in the cytoplasm. The catalysed reaction is L-aspartate + 2-oxoglutarate = oxaloacetate + L-glutamate. The polypeptide is Aspartate aminotransferase (aspC) (Sulfurisphaera tokodaii (strain DSM 16993 / JCM 10545 / NBRC 100140 / 7) (Sulfolobus tokodaii)).